Reading from the N-terminus, the 575-residue chain is MALFRLSAAIVVIFLYIWSPSQRIQCRCRSFERCWPSQQDWSALNNSISGHLVNPRPVAYVCHDPDFDHDACEHVRYMANNSLWRASMPGALQNTVWESSLVSTQTCLPFSAREQPCNQGRIPLYAAVVESKKEVQTAVRFARKYNLRLVIRNTGHDGAGSSSGPESFQIFTHRLNSILYHSNFCPGGSHSKYQTCAGPAVSIGAGVMFRDLYARGAERGFVVTGGDSGTVGAAGGFIQGGGVPAFMGYTWGLAVDNVLEFEVVVATGQLVIANADENADLFWALRGGGGGSFGIVVRVTMRTYPDLPTLKGELTVSGNRHDPSFWTEDIAGLLNALRAFNHLDAPGVFRLIQTSAKGSISAVLEVYLLNRTLAEDLTRMMGPILGTSRRKYNISPITVGKISSFANPNEPTITEFFGSTILSRNFFESPNGPLVMAKRMAAINLDPGDGLLTSNLGGRINNENSDLPLHPAWRSSAHLVSLVVNVDTSLRARERAMVRLTDELMPMLYAIDSSQWVSYSNMGNPNEPDFKERYWGMRNYRRLVSIKKKWDPKDLFIARVGVRSDGWDSEGMCRT.

A signal peptide spans 1 to 23 (MALFRLSAAIVVIFLYIWSPSQR). 2 N-linked (GlcNAc...) asparagine glycosylation sites follow: asparagine 45 and asparagine 80. The FAD-binding PCMH-type domain maps to 118–306 (NQGRIPLYAA…VRVTMRTYPD (189 aa)). At histidine 156 the chain carries Pros-8alpha-FAD histidine. An N-linked (GlcNAc...) asparagine glycan is attached at asparagine 370.

Belongs to the oxygen-dependent FAD-linked oxidoreductase family. Requires FAD as cofactor.

It catalyses the reaction peniprequinolone + A = yaequinolone E + AH2. The protein operates within secondary metabolite biosynthesis. It participates in alkaloid biosynthesis. It functions in the pathway mycotoxin biosynthesis. Its function is as follows. FAD-linked oxidoreductase; part of the gene cluster that mediates the biosynthesis of the aspoquinolone mycotoxins. Within the pathway, asqF performs FAD-dependent dehydrogenation of the dimethylallyl quinolone peniprequinolone to yield the conjugated aryl diene yaequinolone E. The first step of the pathway is catalyzed by the nonribosomal peptide synthetase asqK that condenses anthranilic acid and O-methyl-L-tyrosine to produce 4'-methoxycyclopeptin. 4'-methoxycyclopeptin is then converted to 4'-methoxydehydrocyclopeptin by the ketoglutarate-dependent dioxygenase asqJ. AsqJ also converts its first product 4'-methoxydehydrocyclopeptin to 4'-methoxycyclopenin. The following conversion of 4'-methoxycyclopenin into 4'-methoxyviridicatin is catalyzed by the cyclopenase asqI. 4'-methoxyviridicatin is the precursor of quinolone natural products, and is further converted to quinolinone B. The prenyltransferase asqH1 then catalyzes the canonical Friedel-Crafts alkylation of quinolinone B with dimethylallyl cation to yield dimethylallyl quinolone, which is subjected to FAD-dependent dehydrogenation by the FAD-linked oxidoreductase asqF to yield conjugated aryl diene. The delta(3') double bond then serves as the site of the second alkylation with DMAPP catalyzed by the prenyltransferase asqH2 to yield a carbenium ion intermediate, which can be attacked by H(2)O to yield a styrenyl quinolone containing a C3'-hydroxyprenyl chain. The FAD-dependent monooxygenase asqG performs epoxidation of the terminal C7'-C8' olefin. Finally, after dehydratation of the epoxide at C3 by asqC, the quinolone epoxide rearrangement protein asqO catalyzes an enzymatic 3-exo-tet cyclization to yield the cyclopropyl-THF ring system in aspoquinolone. The sequence is that of FAD-linked oxidoreductase asqF from Emericella nidulans (strain FGSC A4 / ATCC 38163 / CBS 112.46 / NRRL 194 / M139) (Aspergillus nidulans).